We begin with the raw amino-acid sequence, 841 residues long: Transcription regulator protein BACH2 (841 aa).

The BTB domain maps to 37–103 (CDVTLIVERK…AYTAKLLLSR (67 aa)). 3 disordered regions span residues 153–173 (HEDC…TMDS), 204–226 (EALL…DALT), and 246–329 (SSHS…AACL). Over residues 160–172 (AGEEEDEEEETMD) the composition is skewed to acidic residues. Composition is skewed to basic and acidic residues over residues 214-224 (TDTKESSEKDA) and 298-313 (PDAK…DRKQ). Serine 315 is modified (phosphoserine). Residues lysine 382 and lysine 421 each participate in a glycyl lysine isopeptide (Lys-Gly) (interchain with G-Cter in SUMO2) cross-link. Serine 521 is modified (phosphoserine; by RPS6KB1). The disordered stretch occupies residues 583-610 (QSYGTNSSDESGSFSEADSESCPVQDRG). Residues 584–598 (SYGTNSSDESGSFSE) are compositionally biased toward polar residues. The 64-residue stretch at 646 to 709 (FIHDVRRRSK…GELLDNFSCL (64 aa)) folds into the bZIP domain. A basic motif region spans residues 651 to 667 (RRRSKNRIAAQRCRKRK). The leucine-zipper stretch occupies residues 671–678 (IQNLECEI). The segment at 777-816 (PGPPWAPSNTSENCTSGRRLEGTDPGTFSERGPPLEPRSQ) is disordered. Residues 821–841 (DFCQEMTDKCTTDEQPRKDYT) carry the Nuclear export signal motif.

The protein belongs to the bZIP family. CNC subfamily. As to quaternary structure, homodimer; disulfide-linked. Heterodimer of BACH2 and Maf-related transcription factors. In terms of processing, phosphorylation at Ser-521 downstream of the PI-3K pathway promotes nuclear export. Post-translationally, the reversible disulfide bond may provide a mechanism to regulate the activity in oxidative stress responses. B-cell specific.

It localises to the cytoplasm. Its subcellular location is the nucleus. Its function is as follows. Transcriptional regulator that acts as a repressor or activator. Binds to Maf recognition elements (MARE). Plays an important role in coordinating transcription activation and repression by MAFK. Induces apoptosis in response to oxidative stress through repression of the antiapoptotic factor HMOX1. Positively regulates the nuclear import of actin. Is a key regulator of adaptive immunity, crucial for the maintenance of regulatory T-cell function and B-cell maturation. The sequence is that of Transcription regulator protein BACH2 (BACH2) from Homo sapiens (Human).